The chain runs to 613 residues: MPDYRSKTSTHGRNMAGARALWRATGMKDDDFKKPIIAIANSFTQFVPGHVHLKDLGQLVAREIERAGGVAKEFNTIAVDDGIAMGHDGMLYSLPSREIIADSVEYMVNAHCADAIVCISNCDKITPGMLMAALRLNIPVIFVSGGPMEAGKTKLASHGLDLVDAMVIAADSSASDEKVAEYERSACPTCGSCSGMFTANSMNCLVEALGLALPGNGSTLATHSDREQLFLQAGRTIVELCKRYYGENDESVLPRNIANFKAFENAMTLDIAMGGSTNTILHLLAAAQEAEIDFDLRDIDRLSRHVPQLCKVAPNIQKYHMEDVHRAGGIFSILGSLARGGLLHTDLPTVHSKSIAEGIAKWDITQTDDEAVHTFFKAGPAGIPTQTAFSQSTRWDTLDDDRENGCIRSVEHAYSQEGGLAVLYGNIALDGCVVKTAGVDESIHVFEGRAKIYESQDSSVRGILADEVKEGDIVIIRYEGPKGGPGMQEMLYPTSYLKSKGLGKACALLTDGRFSGGTSGLSIGHASPEAAAGGAIGLVQDGDKVLIDIPNRSINLLISDEELAARRVEQDKKGWKPVEKRPRKVTTALKAYALLATSADKGAVRNKAMLDGL.

Aspartate 81 serves as a coordination point for Mg(2+). Cysteine 122 is a [2Fe-2S] cluster binding site. 2 residues coordinate Mg(2+): aspartate 123 and lysine 124. Position 124 is an N6-carboxylysine (lysine 124). Cysteine 193 contributes to the [2Fe-2S] cluster binding site. A Mg(2+)-binding site is contributed by glutamate 489. The Proton acceptor role is filled by serine 515.

It belongs to the IlvD/Edd family. In terms of assembly, homodimer. [2Fe-2S] cluster is required as a cofactor. The cofactor is Mg(2+).

It catalyses the reaction (2R)-2,3-dihydroxy-3-methylbutanoate = 3-methyl-2-oxobutanoate + H2O. It carries out the reaction (2R,3R)-2,3-dihydroxy-3-methylpentanoate = (S)-3-methyl-2-oxopentanoate + H2O. Its pathway is amino-acid biosynthesis; L-isoleucine biosynthesis; L-isoleucine from 2-oxobutanoate: step 3/4. The protein operates within amino-acid biosynthesis; L-valine biosynthesis; L-valine from pyruvate: step 3/4. In terms of biological role, functions in the biosynthesis of branched-chain amino acids. Catalyzes the dehydration of (2R,3R)-2,3-dihydroxy-3-methylpentanoate (2,3-dihydroxy-3-methylvalerate) into 2-oxo-3-methylpentanoate (2-oxo-3-methylvalerate) and of (2R)-2,3-dihydroxy-3-methylbutanoate (2,3-dihydroxyisovalerate) into 2-oxo-3-methylbutanoate (2-oxoisovalerate), the penultimate precursor to L-isoleucine and L-valine, respectively. The polypeptide is Dihydroxy-acid dehydratase (Pseudomonas fluorescens (strain SBW25)).